A 215-amino-acid polypeptide reads, in one-letter code: MDSAFHEALASGIEALGLPVDEAARALLERYADRLLAWNRKVNLTAITAPAELAEKHLVDSLVLLPFLTGAGTLLDVGSGAGLPGIPLACARRDLSVTCCDGVAKKIAFVKAVSAELDLPVRGVAVRAEGEPEREGLPRADAVVSRALAEPDRWVPVGARYLAEGGTLFAMLGREVDRAGLEAAGAAEGLTLVGLDVYELPVSHAARAVARWQQR.

Residues Gly-78, Leu-83, 128–129, and Arg-146 contribute to the S-adenosyl-L-methionine site; that span reads AE.

This sequence belongs to the methyltransferase superfamily. RNA methyltransferase RsmG family.

It localises to the cytoplasm. The catalysed reaction is guanosine(527) in 16S rRNA + S-adenosyl-L-methionine = N(7)-methylguanosine(527) in 16S rRNA + S-adenosyl-L-homocysteine. In terms of biological role, specifically methylates the N7 position of guanine in position 527 of 16S rRNA. This chain is Ribosomal RNA small subunit methyltransferase G, found in Anaeromyxobacter dehalogenans (strain 2CP-1 / ATCC BAA-258).